The sequence spans 164 residues: PTS system sorbose-specific EIIB component (164 aa).

In terms of domain architecture, PTS EIIB type-4 spans 1–164 (MIITLARVDD…AKIDEVFGKE (164 aa)). The Pros-phosphohistidine intermediate role is filled by His14. Position 14 is a phosphohistidine; by EIIA (His14).

Its subcellular location is the cytoplasm. The catalysed reaction is keto-L-sorbose(out) + N(pros)-phospho-L-histidyl-[protein] = L-sorbose 1-phosphate(in) + L-histidyl-[protein]. Functionally, the phosphoenolpyruvate-dependent sugar phosphotransferase system (PTS), a major carbohydrate active transport system, catalyzes the phosphorylation of incoming sugar substrates concomitant with their translocation across the cell membrane. The enzyme II SorABCD PTS system is involved in L-sorbose transport. This is PTS system sorbose-specific EIIB component from Lacticaseibacillus casei (Lactobacillus casei).